We begin with the raw amino-acid sequence, 226 residues long: Late protein I226R (226 aa).

Positions Met1–Gly16 are cleaved as a signal peptide. 2 N-linked (GlcNAc...) asparagine; by host glycosylation sites follow: Asn142 and Asn164.

It belongs to the asfivirus I226R family.

In terms of biological role, plays a role in the inhibition of host NF-kappa-B and IRF3 signaling pathways. Mechanistically, promotes the degradation of host IKBKG through enhancing its ubiquitination leading to inhibition of both pathways. This African swine fever virus (isolate Tick/South Africa/Pretoriuskop Pr4/1996) (ASFV) protein is Late protein I226R.